The following is a 208-amino-acid chain: V-type ATP synthase subunit D (208 aa).

This sequence belongs to the V-ATPase D subunit family.

Functionally, produces ATP from ADP in the presence of a proton gradient across the membrane. In Streptococcus pyogenes serotype M49 (strain NZ131), this protein is V-type ATP synthase subunit D.